The following is a 464-amino-acid chain: GTPase Der (464 aa).

2 EngA-type G domains span residues 3-166 and 177-350; these read PTIA…AVES and LKMA…QAAT. Residues 9-16, 56-60, 118-121, 183-190, 230-234, and 295-298 each bind GTP; these read GRPNVGKS, DTGGI, NKVD, DTAGV, and NKWD. A KH-like domain is found at 351–435; sequence EKYSTSFLTR…PVRIEYRSGD (85 aa).

This sequence belongs to the TRAFAC class TrmE-Era-EngA-EngB-Septin-like GTPase superfamily. EngA (Der) GTPase family. Associates with the 50S ribosomal subunit.

Its function is as follows. GTPase that plays an essential role in the late steps of ribosome biogenesis. In Teredinibacter turnerae (strain ATCC 39867 / T7901), this protein is GTPase Der.